A 207-amino-acid polypeptide reads, in one-letter code: High frequency lysogenization protein HflD homolog (207 aa).

It belongs to the HflD family.

Its subcellular location is the cytoplasm. The protein resides in the cell inner membrane. In Tolumonas auensis (strain DSM 9187 / NBRC 110442 / TA 4), this protein is High frequency lysogenization protein HflD homolog.